The following is a 515-amino-acid chain: Protein translocase subunit SecD (515 aa).

A helical membrane pass occupies residues 6 to 26; the sequence is LYSLIFIIILTAFAVWVDLPG. The segment at 141–186 is disordered; sequence AITNGNQNQNSTKNGTPTPGTTPTPESTPQANQTPVAANVTPTPED. Over residues 150–169 the composition is skewed to low complexity; the sequence is NSTKNGTPTPGTTPTPESTP. Polar residues predominate over residues 170 to 186; sequence QANQTPVAANVTPTPED. A run of 5 helical transmembrane segments spans residues 322–342, 344–364, 367–387, 427–447, and 450–470; these read RSIRAGLIGIGAVALFMILYY, LPGFVSVVALAIYAAVVFALF, IPVTLTLAGIAGFILSVGMAV, ISTLITCAILIWFGSRFGASV, and GFAITLAIGVIVSMFTAIFVT.

Belongs to the SecD/SecF family. SecD subfamily. As to quaternary structure, forms a complex with SecF. Part of the essential Sec protein translocation apparatus which comprises SecA, SecYEG and auxiliary proteins SecDF. Other proteins may also be involved.

It localises to the cell membrane. Its function is as follows. Part of the Sec protein translocase complex. Interacts with the SecYEG preprotein conducting channel. SecDF uses the proton motive force (PMF) to complete protein translocation after the ATP-dependent function of SecA. The sequence is that of Protein translocase subunit SecD from Thermobaculum terrenum (strain ATCC BAA-798 / CCMEE 7001 / YNP1).